The sequence spans 304 residues: ADP-polyphosphate phosphotransferase (304 aa).

This sequence belongs to the polyphosphate kinase 2 (PPK2) family. Class I subfamily.

The enzyme catalyses [phosphate](n) + ATP = [phosphate](n+1) + ADP. Functionally, uses inorganic polyphosphate (polyP) as a donor to convert ADP to ATP. The polypeptide is ADP-polyphosphate phosphotransferase (Pseudomonas aeruginosa (strain ATCC 15692 / DSM 22644 / CIP 104116 / JCM 14847 / LMG 12228 / 1C / PRS 101 / PAO1)).